An 84-amino-acid chain; its full sequence is ATP synthase subunit c (84 aa).

The next 2 helical transmembrane spans lie at 9–29 (LGLA…GCGI) and 57–77 (ILGL…NLII).

The protein belongs to the ATPase C chain family. In terms of assembly, F-type ATPases have 2 components, F(1) - the catalytic core - and F(0) - the membrane proton channel. F(1) has five subunits: alpha(3), beta(3), gamma(1), delta(1), epsilon(1). F(0) has three main subunits: a(1), b(2) and c(10-14). The alpha and beta chains form an alternating ring which encloses part of the gamma chain. F(1) is attached to F(0) by a central stalk formed by the gamma and epsilon chains, while a peripheral stalk is formed by the delta and b chains.

The protein localises to the cell membrane. Functionally, f(1)F(0) ATP synthase produces ATP from ADP in the presence of a proton or sodium gradient. F-type ATPases consist of two structural domains, F(1) containing the extramembraneous catalytic core and F(0) containing the membrane proton channel, linked together by a central stalk and a peripheral stalk. During catalysis, ATP synthesis in the catalytic domain of F(1) is coupled via a rotary mechanism of the central stalk subunits to proton translocation. In terms of biological role, key component of the F(0) channel; it plays a direct role in translocation across the membrane. A homomeric c-ring of between 10-14 subunits forms the central stalk rotor element with the F(1) delta and epsilon subunits. The polypeptide is ATP synthase subunit c (Lawsonia intracellularis (strain PHE/MN1-00)).